A 196-amino-acid polypeptide reads, in one-letter code: Endoribonuclease YbeY (196 aa).

Residues His120, His124, and His130 each coordinate Zn(2+).

It belongs to the endoribonuclease YbeY family. It depends on Zn(2+) as a cofactor.

It localises to the cytoplasm. In terms of biological role, single strand-specific metallo-endoribonuclease involved in late-stage 70S ribosome quality control and in maturation of the 3' terminus of the 16S rRNA. The chain is Endoribonuclease YbeY from Corynebacterium diphtheriae (strain ATCC 700971 / NCTC 13129 / Biotype gravis).